The primary structure comprises 137 residues: Nucleoside diphosphate kinase (137 aa).

The ATP site is built by lysine 11, phenylalanine 59, arginine 87, threonine 93, arginine 104, and asparagine 114. The active-site Pros-phosphohistidine intermediate is histidine 117.

It belongs to the NDK family. In terms of assembly, homotetramer. The cofactor is Mg(2+).

It is found in the cytoplasm. It carries out the reaction a 2'-deoxyribonucleoside 5'-diphosphate + ATP = a 2'-deoxyribonucleoside 5'-triphosphate + ADP. The catalysed reaction is a ribonucleoside 5'-diphosphate + ATP = a ribonucleoside 5'-triphosphate + ADP. In terms of biological role, major role in the synthesis of nucleoside triphosphates other than ATP. The ATP gamma phosphate is transferred to the NDP beta phosphate via a ping-pong mechanism, using a phosphorylated active-site intermediate. This Frankia casuarinae (strain DSM 45818 / CECT 9043 / HFP020203 / CcI3) protein is Nucleoside diphosphate kinase.